We begin with the raw amino-acid sequence, 509 residues long: Methylthioalkylmalate synthase 1-1, chloroplastic (509 aa).

A chloroplast-targeting transit peptide spans 1–55 (MSFSPTYSIVMASPLLTSSQMIPTTGSTVGFRSILPFGSLRLTRPYKKTSLFISY). The region spanning 91 to 365 (VRVYDTTLRD…YTRIDTRQIM (275 aa)) is the Pyruvate carboxyltransferase domain. Residues D100, H298, and H300 each contribute to the Mn(2+) site.

This sequence belongs to the alpha-IPM synthase/homocitrate synthase family. As to quaternary structure, monomer. Mn(2+) is required as a cofactor. Requires Co(2+) as cofactor.

The protein resides in the plastid. It is found in the chloroplast. The enzyme catalyses 4-methylsulfanyl-2-oxobutanoate + acetyl-CoA + H2O = 2-(2-methylsulfanyl)ethylmalate + CoA + H(+). It participates in secondary metabolite biosynthesis. Its activity is regulated as follows. Inhibited by EDTA, Cu(2+) and Zn(2+). Determines the side chain length of aliphatic glucosinolate structures. Involved in the biosynthesis of glucosinolate derivative natural products such as 6-(methylsulfinyl)hexylisothiocyanate (6-MSITC), a compound found in wasabi with diverse health-promoting properties. Catalyzes the conversion of 4-methylsulfanyl-2-oxobutanoate (4-MTOB) into 2-(2-methylsulfanyl)ethylmalate (2-(2-MT)EM). This chain is Methylthioalkylmalate synthase 1-1, chloroplastic, found in Eutrema japonicum (Wasabi plant).